The following is a 232-amino-acid chain: Cytidylate kinase (232 aa).

15–23 (GPAGAGKST) is an ATP binding site. Residues 164-192 (KEDPPPISQGQLAAEMKERDMRDSTRADA) are disordered. Over residues 178–189 (EMKERDMRDSTR) the composition is skewed to basic and acidic residues.

Belongs to the cytidylate kinase family. Type 1 subfamily.

It is found in the cytoplasm. The catalysed reaction is CMP + ATP = CDP + ADP. It catalyses the reaction dCMP + ATP = dCDP + ADP. In Solibacter usitatus (strain Ellin6076), this protein is Cytidylate kinase.